A 189-amino-acid chain; its full sequence is Elongation factor P 2 (189 aa).

This sequence belongs to the elongation factor P family.

The protein resides in the cytoplasm. The protein operates within protein biosynthesis; polypeptide chain elongation. Involved in peptide bond synthesis. Stimulates efficient translation and peptide-bond synthesis on native or reconstituted 70S ribosomes in vitro. Probably functions indirectly by altering the affinity of the ribosome for aminoacyl-tRNA, thus increasing their reactivity as acceptors for peptidyl transferase. The protein is Elongation factor P 2 (efp2) of Lactobacillus johnsonii (strain CNCM I-12250 / La1 / NCC 533).